The chain runs to 356 residues: UDP-N-acetylglucosamine--N-acetylmuramyl-(pentapeptide) pyrophosphoryl-undecaprenol N-acetylglucosamine transferase (356 aa).

Residues 15–17, Asn127, Arg163, Ser191, Ile244, 263–268, and Gln288 contribute to the UDP-N-acetyl-alpha-D-glucosamine site; these read TGG and ALTVSE.

It belongs to the glycosyltransferase 28 family. MurG subfamily.

It is found in the cell inner membrane. The catalysed reaction is di-trans,octa-cis-undecaprenyl diphospho-N-acetyl-alpha-D-muramoyl-L-alanyl-D-glutamyl-meso-2,6-diaminopimeloyl-D-alanyl-D-alanine + UDP-N-acetyl-alpha-D-glucosamine = di-trans,octa-cis-undecaprenyl diphospho-[N-acetyl-alpha-D-glucosaminyl-(1-&gt;4)]-N-acetyl-alpha-D-muramoyl-L-alanyl-D-glutamyl-meso-2,6-diaminopimeloyl-D-alanyl-D-alanine + UDP + H(+). It functions in the pathway cell wall biogenesis; peptidoglycan biosynthesis. Cell wall formation. Catalyzes the transfer of a GlcNAc subunit on undecaprenyl-pyrophosphoryl-MurNAc-pentapeptide (lipid intermediate I) to form undecaprenyl-pyrophosphoryl-MurNAc-(pentapeptide)GlcNAc (lipid intermediate II). This is UDP-N-acetylglucosamine--N-acetylmuramyl-(pentapeptide) pyrophosphoryl-undecaprenol N-acetylglucosamine transferase from Klebsiella pneumoniae subsp. pneumoniae (strain ATCC 700721 / MGH 78578).